A 360-amino-acid chain; its full sequence is Phospho-N-acetylmuramoyl-pentapeptide-transferase (360 aa).

The next 10 membrane-spanning stretches (helical) occupy residues Ala26 to Glu46, Met74 to Gly94, Tyr97 to Tyr117, Tyr134 to Asn154, Val168 to Ser188, Gly199 to Ser219, Ser236 to Phe256, Val263 to Leu283, Ile288 to Val308, and Val338 to Lys358.

Belongs to the glycosyltransferase 4 family. MraY subfamily. It depends on Mg(2+) as a cofactor.

The protein resides in the cell inner membrane. The catalysed reaction is UDP-N-acetyl-alpha-D-muramoyl-L-alanyl-gamma-D-glutamyl-meso-2,6-diaminopimeloyl-D-alanyl-D-alanine + di-trans,octa-cis-undecaprenyl phosphate = di-trans,octa-cis-undecaprenyl diphospho-N-acetyl-alpha-D-muramoyl-L-alanyl-D-glutamyl-meso-2,6-diaminopimeloyl-D-alanyl-D-alanine + UMP. Its pathway is cell wall biogenesis; peptidoglycan biosynthesis. Functionally, catalyzes the initial step of the lipid cycle reactions in the biosynthesis of the cell wall peptidoglycan: transfers peptidoglycan precursor phospho-MurNAc-pentapeptide from UDP-MurNAc-pentapeptide onto the lipid carrier undecaprenyl phosphate, yielding undecaprenyl-pyrophosphoryl-MurNAc-pentapeptide, known as lipid I. In Shewanella baltica (strain OS195), this protein is Phospho-N-acetylmuramoyl-pentapeptide-transferase.